Consider the following 411-residue polypeptide: Phosphoglycerate kinase (411 aa).

Residues 1–24 (MTGLCPLHQPSPLDHPHSGGTPMQ) form a disordered region. Substrate is bound by residues 41–43 (DYN), arginine 56, 79–82 (HFGR), arginine 139, and arginine 172. ATP-binding positions include lysine 222, glycine 310, glutamate 341, and 369 to 372 (GGDS).

This sequence belongs to the phosphoglycerate kinase family. Monomer.

Its subcellular location is the cytoplasm. It carries out the reaction (2R)-3-phosphoglycerate + ATP = (2R)-3-phospho-glyceroyl phosphate + ADP. It participates in carbohydrate degradation; glycolysis; pyruvate from D-glyceraldehyde 3-phosphate: step 2/5. The chain is Phosphoglycerate kinase from Deinococcus radiodurans (strain ATCC 13939 / DSM 20539 / JCM 16871 / CCUG 27074 / LMG 4051 / NBRC 15346 / NCIMB 9279 / VKM B-1422 / R1).